Reading from the N-terminus, the 197-residue chain is Imidazoleglycerol-phosphate dehydratase (197 aa).

The protein belongs to the imidazoleglycerol-phosphate dehydratase family.

The protein resides in the cytoplasm. The catalysed reaction is D-erythro-1-(imidazol-4-yl)glycerol 3-phosphate = 3-(imidazol-4-yl)-2-oxopropyl phosphate + H2O. Its pathway is amino-acid biosynthesis; L-histidine biosynthesis; L-histidine from 5-phospho-alpha-D-ribose 1-diphosphate: step 6/9. In Nitrosococcus oceani (strain ATCC 19707 / BCRC 17464 / JCM 30415 / NCIMB 11848 / C-107), this protein is Imidazoleglycerol-phosphate dehydratase.